The chain runs to 139 residues: uncharacterized protein (139 aa).

This is an uncharacterized protein from Invertebrate iridescent virus 6 (IIV-6).